A 220-amino-acid polypeptide reads, in one-letter code: Vesicle-associated membrane protein 7 (220 aa).

The residue at position 2 (Ala2) is an N-acetylalanine. Over 2-188 (AILFAVVARG…ARAMCVKNVK (187 aa)) the chain is Cytoplasmic. Positions 7–110 (VVARGTTILA…AMNSEFSSVL (104 aa)) constitute a Longin domain. Residues 125–185 (RVTETQAQVD…RNLARAMCVK (61 aa)) form the v-SNARE coiled-coil homology domain. Phosphoserine occurs at positions 167 and 168. The helical; Anchor for type IV membrane protein transmembrane segment at 189–209 (LTAIIVVVSIVFIYIIVSPLC) threads the bilayer. The Vesicular segment spans residues 210 to 220 (GGFTWPSCVKK).

Belongs to the synaptobrevin family. As to quaternary structure, may interact with STX17. Component of the SNARE complex composed of STX4, SNAP23 and VAMP7 that binds SYT7 during lysosomal exocytosis. Component of the SNARE complex composed of STX7, STX8, VAMP7 and VTI1B that is required for heterotypic fusion of late endosomes with lysosomes. Interacts with PICALM. Interacts with RAB21. In terms of tissue distribution, expressed in brain, kidney, liver, lung, spleen and thymus. Not expressed in heart and skeletal muscle.

It localises to the cytoplasmic vesicle. Its subcellular location is the secretory vesicle membrane. The protein resides in the golgi apparatus. It is found in the trans-Golgi network membrane. The protein localises to the late endosome membrane. It localises to the lysosome membrane. Its subcellular location is the endoplasmic reticulum membrane. The protein resides in the phagosome membrane. It is found in the synapse. The protein localises to the synaptosome. Functionally, involved in the targeting and/or fusion of transport vesicles to their target membrane during transport of proteins from the early endosome to the lysosome. Required for heterotypic fusion of late endosomes with lysosomes and homotypic lysosomal fusion. Required for calcium regulated lysosomal exocytosis. Involved in the export of chylomicrons from the endoplasmic reticulum to the cis Golgi. Required for exocytosis of mediators during eosinophil and neutrophil degranulation, and target cell killing by natural killer cells. Required for focal exocytosis of late endocytic vesicles during phagosome formation. The polypeptide is Vesicle-associated membrane protein 7 (Vamp7) (Rattus norvegicus (Rat)).